Here is a 202-residue protein sequence, read N- to C-terminus: Protein phosphatase 1 regulatory subunit 1B (202 aa).

Methionine 1 is modified (N-acetylmethionine). Residues 1–202 form a disordered region; it reads MDPKDRKKIQ…QRPAHPEPGT (202 aa). Threonine 34 carries the phosphothreonine; by PKA modification. Basic and acidic residues predominate over residues 41–63; the sequence is LSEHSSPEEEASPHQRASGEGHH. Residues serine 45 and serine 46 each carry the phosphoserine modification. The residue at position 75 (threonine 75) is a Phosphothreonine; by CDK5. Over residues 89–100 the composition is skewed to polar residues; it reads HLQSISNLGENQ. A Phosphoserine modification is found at serine 102. A compositionally biased stretch (basic and acidic residues) spans 109 to 118; it reads GELRELGYPR. Over residues 119 to 136 the composition is skewed to acidic residues; sequence EEEEEEEEEDEEEEEDSQ. Serine 135 bears the Phosphoserine mark. Over residues 191-202 the composition is skewed to basic and acidic residues; sequence EPQRPAHPEPGT.

Belongs to the protein phosphatase inhibitor 1 family. Dopamine- and cyclic AMP-regulated neuronal phosphoprotein. Post-translationally, phosphorylation of Thr-34 is required for activity.

It localises to the cytoplasm. Functionally, inhibitor of protein-phosphatase 1. The protein is Protein phosphatase 1 regulatory subunit 1B (PPP1R1B) of Bos taurus (Bovine).